Reading from the N-terminus, the 325-residue chain is Foldase protein PrsA (325 aa).

Positions 1–20 (MKLMNKIIVPVTASALLLGA) are cleaved as a signal peptide. A lipid anchor (N-palmitoyl cysteine) is attached at Cys-21. A lipid anchor (S-diacylglycerol cysteine) is attached at Cys-21. The PpiC domain occupies 139–245 (ENSKKTSHIL…YGYHIIKADK (107 aa)). Disordered stretches follow at residues 159-200 (EGLS…SAKK) and 303-325 (PDKI…NSGS).

It belongs to the PrsA family.

It localises to the cell membrane. It carries out the reaction [protein]-peptidylproline (omega=180) = [protein]-peptidylproline (omega=0). Its function is as follows. Plays a major role in protein secretion by helping the post-translocational extracellular folding of several secreted proteins. The protein is Foldase protein PrsA of Staphylococcus epidermidis (strain ATCC 35984 / DSM 28319 / BCRC 17069 / CCUG 31568 / BM 3577 / RP62A).